Reading from the N-terminus, the 185-residue chain is ATP-dependent protease subunit HslV (185 aa).

Residue threonine 12 is part of the active site. The Na(+) site is built by alanine 168, cysteine 171, and threonine 174.

The protein belongs to the peptidase T1B family. HslV subfamily. In terms of assembly, a double ring-shaped homohexamer of HslV is capped on each side by a ring-shaped HslU homohexamer. The assembly of the HslU/HslV complex is dependent on binding of ATP.

The protein resides in the cytoplasm. It catalyses the reaction ATP-dependent cleavage of peptide bonds with broad specificity.. With respect to regulation, allosterically activated by HslU binding. Its function is as follows. Protease subunit of a proteasome-like degradation complex believed to be a general protein degrading machinery. The polypeptide is ATP-dependent protease subunit HslV (Cereibacter sphaeroides (strain ATCC 17025 / ATH 2.4.3) (Rhodobacter sphaeroides)).